We begin with the raw amino-acid sequence, 632 residues long: 1-deoxy-D-xylulose-5-phosphate synthase (632 aa).

Thiamine diphosphate-binding positions include histidine 87 and 128–130 (GHS). Aspartate 159 contacts Mg(2+). Thiamine diphosphate is bound by residues 160 to 161 (GA), asparagine 188, phenylalanine 295, and glutamate 378. Residue asparagine 188 participates in Mg(2+) binding.

It belongs to the transketolase family. DXPS subfamily. In terms of assembly, homodimer. Mg(2+) serves as cofactor. Thiamine diphosphate is required as a cofactor.

It catalyses the reaction D-glyceraldehyde 3-phosphate + pyruvate + H(+) = 1-deoxy-D-xylulose 5-phosphate + CO2. It functions in the pathway metabolic intermediate biosynthesis; 1-deoxy-D-xylulose 5-phosphate biosynthesis; 1-deoxy-D-xylulose 5-phosphate from D-glyceraldehyde 3-phosphate and pyruvate: step 1/1. Its function is as follows. Catalyzes the acyloin condensation reaction between C atoms 2 and 3 of pyruvate and glyceraldehyde 3-phosphate to yield 1-deoxy-D-xylulose-5-phosphate (DXP). The protein is 1-deoxy-D-xylulose-5-phosphate synthase of Pseudomonas fluorescens (strain SBW25).